We begin with the raw amino-acid sequence, 461 residues long: Porin AaxA (461 aa).

The first 22 residues, 1 to 22 (MSFRSILLTALLSLSFTNTMQA), serve as a signal peptide directing secretion.

This sequence belongs to the OprB family.

It is found in the cell outer membrane. Facilitates L-arginine uptake, as part of the AaxABC system. The arginine uptake by the bacterium in the macrophage may be a virulence factor against the host innate immune response. The chain is Porin AaxA (aaxA) from Chlamydia muridarum (strain MoPn / Nigg).